Reading from the N-terminus, the 578-residue chain is Tetratricopeptide repeat protein ttc-39B (578 aa).

TPR repeat units follow at residues 297–330, 481–514, and 522–554; these read AIML…QDVY, CLYY…ESSI, and PNAT…YKSY.

This Caenorhabditis elegans protein is Tetratricopeptide repeat protein ttc-39B.